A 497-amino-acid polypeptide reads, in one-letter code: Glutamyl-tRNA(Gln) amidotransferase subunit A (497 aa).

Catalysis depends on charge relay system residues Lys-91 and Ser-166. A disordered region spans residues 143–171; the sequence is SSTENSAYGPTHNPWDLERTAGGSGGGSS. The active-site Acyl-ester intermediate is Ser-190.

The protein belongs to the amidase family. GatA subfamily. In terms of assembly, heterotrimer of A, B and C subunits.

The enzyme catalyses L-glutamyl-tRNA(Gln) + L-glutamine + ATP + H2O = L-glutaminyl-tRNA(Gln) + L-glutamate + ADP + phosphate + H(+). In terms of biological role, allows the formation of correctly charged Gln-tRNA(Gln) through the transamidation of misacylated Glu-tRNA(Gln) in organisms which lack glutaminyl-tRNA synthetase. The reaction takes place in the presence of glutamine and ATP through an activated gamma-phospho-Glu-tRNA(Gln). The protein is Glutamyl-tRNA(Gln) amidotransferase subunit A of Corynebacterium glutamicum (strain R).